We begin with the raw amino-acid sequence, 470 residues long: Ribulose bisphosphate carboxylase large chain (470 aa).

Residues N115 and T165 each contribute to the substrate site. K167 (proton acceptor) is an active-site residue. A substrate-binding site is contributed by K169. Mg(2+)-binding residues include K193, D195, and E196. K193 is modified (N6-carboxylysine). H286 serves as the catalytic Proton acceptor. Substrate-binding residues include R287, H319, and S371.

It belongs to the RuBisCO large chain family. Type I subfamily. As to quaternary structure, heterohexadecamer of 8 large chains and 8 small chains. Mg(2+) is required as a cofactor.

It is found in the carboxysome. The catalysed reaction is 2 (2R)-3-phosphoglycerate + 2 H(+) = D-ribulose 1,5-bisphosphate + CO2 + H2O. The enzyme catalyses D-ribulose 1,5-bisphosphate + O2 = 2-phosphoglycolate + (2R)-3-phosphoglycerate + 2 H(+). In terms of biological role, ruBisCO catalyzes two reactions: the carboxylation of D-ribulose 1,5-bisphosphate, the primary event in carbon dioxide fixation, as well as the oxidative fragmentation of the pentose substrate in the photorespiration process. Both reactions occur simultaneously and in competition at the same active site. This Prochlorococcus marinus (strain MIT 9303) protein is Ribulose bisphosphate carboxylase large chain.